The sequence spans 154 residues: L-alanine exporter AlaE (154 aa).

Helical transmembrane passes span 21 to 41 (FAMV…LSGM), 51 to 71 (LVAI…RDFF), 90 to 110 (ILAY…VIGA), and 115 to 135 (IVAA…VYGY).

Belongs to the AlaE exporter family.

It is found in the cell inner membrane. Exports L-alanine. This is L-alanine exporter AlaE from Escherichia fergusonii (strain ATCC 35469 / DSM 13698 / CCUG 18766 / IAM 14443 / JCM 21226 / LMG 7866 / NBRC 102419 / NCTC 12128 / CDC 0568-73).